The primary structure comprises 800 residues: Phenylalanine--tRNA ligase beta subunit (800 aa).

The 116-residue stretch at 39 to 154 (TKEIKNLVVG…TEVKPGTDAL (116 aa)) folds into the tRNA-binding domain. The B5 domain maps to 408–483 (CFVTPIDISV…RIYGYDKIPS (76 aa)). The Mg(2+) site is built by Asp461, Asp467, Glu470, and Glu471. Positions 708–800 (PRFPGVSRDI…ALKSEGATIR (93 aa)) constitute an FDX-ACB domain.

The protein belongs to the phenylalanyl-tRNA synthetase beta subunit family. Type 1 subfamily. As to quaternary structure, tetramer of two alpha and two beta subunits. Mg(2+) serves as cofactor.

It localises to the cytoplasm. It catalyses the reaction tRNA(Phe) + L-phenylalanine + ATP = L-phenylalanyl-tRNA(Phe) + AMP + diphosphate + H(+). In Staphylococcus saprophyticus subsp. saprophyticus (strain ATCC 15305 / DSM 20229 / NCIMB 8711 / NCTC 7292 / S-41), this protein is Phenylalanine--tRNA ligase beta subunit.